The sequence spans 951 residues: Bifunctional glutamine synthetase adenylyltransferase/adenylyl-removing enzyme (951 aa).

Residues methionine 1–threonine 440 form an adenylyl removase region. The tract at residues histidine 449–serine 951 is adenylyl transferase.

It belongs to the GlnE family. Mg(2+) is required as a cofactor.

It catalyses the reaction [glutamine synthetase]-O(4)-(5'-adenylyl)-L-tyrosine + phosphate = [glutamine synthetase]-L-tyrosine + ADP. The catalysed reaction is [glutamine synthetase]-L-tyrosine + ATP = [glutamine synthetase]-O(4)-(5'-adenylyl)-L-tyrosine + diphosphate. In terms of biological role, involved in the regulation of glutamine synthetase GlnA, a key enzyme in the process to assimilate ammonia. When cellular nitrogen levels are high, the C-terminal adenylyl transferase (AT) inactivates GlnA by covalent transfer of an adenylyl group from ATP to specific tyrosine residue of GlnA, thus reducing its activity. Conversely, when nitrogen levels are low, the N-terminal adenylyl removase (AR) activates GlnA by removing the adenylyl group by phosphorolysis, increasing its activity. The regulatory region of GlnE binds the signal transduction protein PII (GlnB) which indicates the nitrogen status of the cell. The protein is Bifunctional glutamine synthetase adenylyltransferase/adenylyl-removing enzyme of Yersinia pestis bv. Antiqua (strain Antiqua).